A 689-amino-acid polypeptide reads, in one-letter code: Glycine--tRNA ligase beta subunit (689 aa).

Belongs to the class-II aminoacyl-tRNA synthetase family. As to quaternary structure, tetramer of two alpha and two beta subunits.

It localises to the cytoplasm. The enzyme catalyses tRNA(Gly) + glycine + ATP = glycyl-tRNA(Gly) + AMP + diphosphate. In Shewanella pealeana (strain ATCC 700345 / ANG-SQ1), this protein is Glycine--tRNA ligase beta subunit.